The sequence spans 152 residues: Large ribosomal subunit protein bL9 (152 aa).

Belongs to the bacterial ribosomal protein bL9 family.

Binds to the 23S rRNA. The chain is Large ribosomal subunit protein bL9 from Trichormus variabilis (strain ATCC 29413 / PCC 7937) (Anabaena variabilis).